The following is a 436-amino-acid chain: UPF0597 protein DP0591 (436 aa).

This sequence belongs to the UPF0597 family.

The polypeptide is UPF0597 protein DP0591 (Desulfotalea psychrophila (strain LSv54 / DSM 12343)).